A 365-amino-acid polypeptide reads, in one-letter code: tRNA/tmRNA (uracil-C(5))-methyltransferase (365 aa).

S-adenosyl-L-methionine-binding residues include Gln-189, Tyr-217, Asn-222, Glu-238, and Asp-298. Residue Cys-323 is the Nucleophile of the active site. Glu-357 (proton acceptor) is an active-site residue.

The protein belongs to the class I-like SAM-binding methyltransferase superfamily. RNA M5U methyltransferase family. TrmA subfamily.

It carries out the reaction uridine(54) in tRNA + S-adenosyl-L-methionine = 5-methyluridine(54) in tRNA + S-adenosyl-L-homocysteine + H(+). The enzyme catalyses uridine(341) in tmRNA + S-adenosyl-L-methionine = 5-methyluridine(341) in tmRNA + S-adenosyl-L-homocysteine + H(+). Dual-specificity methyltransferase that catalyzes the formation of 5-methyluridine at position 54 (m5U54) in all tRNAs, and that of position 341 (m5U341) in tmRNA (transfer-mRNA). This chain is tRNA/tmRNA (uracil-C(5))-methyltransferase, found in Shewanella sp. (strain MR-4).